The primary structure comprises 269 residues: Bifunctional protein FolD (269 aa).

NADP(+)-binding positions include 149–151 and Val215; that span reads GLG.

Belongs to the tetrahydrofolate dehydrogenase/cyclohydrolase family. As to quaternary structure, homodimer.

It catalyses the reaction (6R)-5,10-methylene-5,6,7,8-tetrahydrofolate + NADP(+) = (6R)-5,10-methenyltetrahydrofolate + NADPH. The catalysed reaction is (6R)-5,10-methenyltetrahydrofolate + H2O = (6R)-10-formyltetrahydrofolate + H(+). The protein operates within one-carbon metabolism; tetrahydrofolate interconversion. In terms of biological role, catalyzes the oxidation of 5,10-methylenetetrahydrofolate to 5,10-methenyltetrahydrofolate and then the hydrolysis of 5,10-methenyltetrahydrofolate to 10-formyltetrahydrofolate. This Mycoplasma pneumoniae (strain ATCC 29342 / M129 / Subtype 1) (Mycoplasmoides pneumoniae) protein is Bifunctional protein FolD.